A 197-amino-acid polypeptide reads, in one-letter code: Inner membrane-spanning protein YciB (197 aa).

Transmembrane regions (helical) follow at residues 36 to 56 (IYSA…ALFL), 64 to 84 (GQWL…TFHS), 90 to 110 (WKAP…HFIG), 135 to 155 (LAWI…AFTF), and 162 to 182 (FKVF…GVYL).

Belongs to the YciB family.

Its subcellular location is the cell inner membrane. Its function is as follows. Plays a role in cell envelope biogenesis, maintenance of cell envelope integrity and membrane homeostasis. The polypeptide is Inner membrane-spanning protein YciB (Pseudomonas putida (strain GB-1)).